The chain runs to 240 residues: Probable transcriptional regulatory protein BLi02909/BL01150 (240 aa).

Positions 1-14 (MAGHSKWKNIQRRK) are enriched in basic residues. The interval 1-21 (MAGHSKWKNIQRRKNAQDAKR) is disordered.

Belongs to the TACO1 family.

The protein localises to the cytoplasm. In Bacillus licheniformis (strain ATCC 14580 / DSM 13 / JCM 2505 / CCUG 7422 / NBRC 12200 / NCIMB 9375 / NCTC 10341 / NRRL NRS-1264 / Gibson 46), this protein is Probable transcriptional regulatory protein BLi02909/BL01150.